Consider the following 368-residue polypeptide: Protein HGH1 homolog (368 aa).

The protein belongs to the HGH1 family.

The polypeptide is Protein HGH1 homolog (Drosophila pseudoobscura pseudoobscura (Fruit fly)).